A 186-amino-acid chain; its full sequence is UPF0200 protein PF1294 (186 aa).

7-14 (GMPGSGKG) lines the ATP pocket.

The protein belongs to the UPF0200 family.

This chain is UPF0200 protein PF1294, found in Pyrococcus furiosus (strain ATCC 43587 / DSM 3638 / JCM 8422 / Vc1).